The primary structure comprises 643 residues: Mitochondrial Rho GTPase 2 (643 aa).

At 1–611 (MMLGGKSSAG…SGRRSRNIRQ (611 aa)) the chain is on the cytoplasmic side. The region spanning 12 to 179 (RTSLRVAVAG…FYFASKAVLH (168 aa)) is the Miro 1 domain. 2 consecutive EF-hand domains span residues 195–230 (RLRR…CFGA) and 315–350 (EAMD…APDS). Residues Asp208, Asp210, Asp212, Glu219, Asp328, Asp330, Asp332, and Glu339 each contribute to the Ca(2+) site. Positions 423-592 (RNVFQCFVFG…FSRIVSTAEN (170 aa)) constitute a Miro 2 domain. The helical transmembrane segment at 612–632 (LVNSSLLFVSVGTAVGFAGLA) threads the bilayer. Over 633-643 (AYRAYSARKNA) the chain is Mitochondrial intermembrane.

Belongs to the mitochondrial Rho GTPase family. In terms of tissue distribution, expressed roots, rosette and cauline leaves, stems, flowers and siliques.

It is found in the mitochondrion outer membrane. Activated by calcium. In terms of biological role, calcium-binding mitochondrial GTPase involved in calcium signaling during salt stress response. May play a role in the progression of embryonic cell division, development of haploid male and female gametes, and pollen tube growth. This chain is Mitochondrial Rho GTPase 2, found in Arabidopsis thaliana (Mouse-ear cress).